The sequence spans 461 residues: pre-mRNA splicing regulator USH1G (461 aa).

3 ANK repeats span residues 31–60 (DGMT…DPDK), 64–93 (WGNT…NIWC), and 97–126 (DYHT…KQSS). A disordered region spans residues 329–368 (LGREDGGLDGAGTPRGRLHSSPSLDDDSLGSANSLQDRSC). Positions 385-447 (LEPETSPLET…KILGAVRRRR (63 aa)) constitute an SAM domain. S422 is modified (phosphoserine).

Part of a complex composed of USH1C, USH1G and MYO7A. Interacts with USH1C (via the first PDZ domain). Interacts with PDZD7. Interacts with CDH23 and PCDH15; these interactions may recruit USH1G to the plasma membrane. Interacts with intraflagellar transport proteins IFT20, IFT52 and IFT57. Interacts with splicing factors SF3B1, PRPF6, PRPF31 and SON. Interacts with the U4/U6.U5 tri-small nuclear ribonucleoprotein (tri-snRNP) complex in the presence of pre-mRNAs. Interacts (via SAM domain) with MAGI2 (via PDZ 6 domain); the interaction is triggered by phosphorylation of USH1G by CK2 and negatively regulates MAGI2-mediated endocytosis. As to expression, detected in stereocilia from cochlear hair cells (at protein level). Detected in retinal photoreceptor cell cilia (at protein level). Highly expressed in the cochlea, testis, cerebellum and eye, and low levels in brain, thymus and spleen. Significant signals detected in the neurosensory epithelium of inner ear cochlea and saccule, especially in inner and outer hair cells.

The protein resides in the cytoplasm. It localises to the cytosol. The protein localises to the cytoskeleton. It is found in the cell membrane. Its subcellular location is the cell projection. The protein resides in the cilium. It localises to the nucleus speckle. The protein localises to the nucleus. It is found in the cajal body. Its subcellular location is the microtubule organizing center. The protein resides in the centrosome. It localises to the photoreceptor inner segment. In terms of biological role, plays a role in pre-mRNA splicing by regulating the release and transfer of U4/U6.U5 tri-small nuclear ribonucleoprotein (tri-snRNP) complexes from their assembly site in Cajal bodies to nuclear speckles, thereby contributing to the assembly of the pre-catalytic spliceosome on target pre-mRNAs. May also participate in recycling of snRNPs back to Cajal bodies during splicing. Plays a role in regulating MAGI2-mediated endocytosis. Anchoring/scaffolding protein that is a part of the functional network formed by USH1C, USH1G, CDH23 and MYO7A that mediates mechanotransduction in cochlear hair cells. Required for normal development and maintenance of cochlear hair cell bundles. Required for normal hearing. The sequence is that of pre-mRNA splicing regulator USH1G (Ush1g) from Mus musculus (Mouse).